Reading from the N-terminus, the 341-residue chain is Syntaxin-122 (341 aa).

M1 carries the post-translational modification N-acetylmethionine. 2 disordered regions span residues 1-22 (MNDL…PPHS) and 111-137 (LDRA…RTSV). Over 1–284 (MNDLLSGSFK…ARFYQKNTRK (284 aa)) the chain is Cytoplasmic. Composition is skewed to polar residues over residues 8–21 (SFKT…SPPH) and 126–137 (PGSSSDRQRTSV). The stretch at 64-185 (CHNLRSSNEQ…GEYPDEATLE (122 aa)) forms a coiled coil. Positions 213-275 (INEIQERHDA…RSGADRLVKA (63 aa)) constitute a t-SNARE coiled-coil homology domain. Residues 285-305 (WTCFAILLLLIIVVLIVVFTV) traverse the membrane as a helical; Anchor for type IV membrane protein segment. Over 306 to 341 (KPWESNGGGGGGAPRQATPVQAQPPPPPAVNRRLLR) the chain is Vesicular. A disordered region spans residues 312–341 (GGGGGGAPRQATPVQAQPPPPPAVNRRLLR).

Belongs to the syntaxin family. As to quaternary structure, part of the t-SNARE complex.

Its subcellular location is the membrane. Vesicle trafficking protein that functions in the secretory pathway. This Arabidopsis thaliana (Mouse-ear cress) protein is Syntaxin-122 (SYP122).